The following is a 176-amino-acid chain: Skp1-related protein (176 aa).

Belongs to the SKP1 family. In terms of assembly, probable component of the SCF(sel-10) E3 ubiquitin-protein ligase complex containing F-box domain-containing protein sel-10 as the substrate recognition component. Interacts with cul-1. May interact with the F-box protein mec-15. Interacts with dre-1. Interacts with syg-1. Interacts with sel-10. As to expression, ubiquitously expressed in the adult.

Probable essential component of SCF (SKP1-CUL1-F-box protein) E3 ubiquitin-protein ligase complexes, which mediate the ubiquitination and subsequent proteasomal degradation of target proteins. Regulates cell proliferation during embryonic and larval development. Involved in synapse elimination in early synapse development. May negatively regulate the apoptotic activity of cep-1 in response to genotoxic stress. Plays a role in sex determination. In Caenorhabditis elegans, this protein is Skp1-related protein.